Here is a 372-residue protein sequence, read N- to C-terminus: Embryonic growth/differentiation factor 1 (372 aa).

A signal peptide spans Met-1–Ala-29. Positions Pro-30–Arg-253 are excised as a propeptide. The interval Arg-67–Thr-86 is disordered. A glycan (N-linked (GlcNAc...) asparagine) is linked at Asn-206. 3 disulfide bridges follow: Cys-267–Cys-337, Cys-296–Cys-369, and Cys-300–Cys-371.

Belongs to the TGF-beta family. Homodimer; disulfide-linked. In terms of tissue distribution, expressed in the brain.

Its subcellular location is the secreted. Functionally, may mediate cell differentiation events during embryonic development. The polypeptide is Embryonic growth/differentiation factor 1 (GDF1) (Homo sapiens (Human)).